A 153-amino-acid chain; its full sequence is Regulatory protein RecX (153 aa).

This sequence belongs to the RecX family.

It localises to the cytoplasm. Modulates RecA activity. The protein is Regulatory protein RecX of Mannheimia succiniciproducens (strain KCTC 0769BP / MBEL55E).